The primary structure comprises 272 residues: 3-methyl-2-oxobutanoate hydroxymethyltransferase (272 aa).

Mg(2+) is bound by residues aspartate 43 and aspartate 82. 3-methyl-2-oxobutanoate-binding positions include 43–44 (DS), aspartate 82, and lysine 112. Glutamate 114 serves as a coordination point for Mg(2+). Glutamate 179 (proton acceptor) is an active-site residue.

This sequence belongs to the PanB family. As to quaternary structure, homodecamer; pentamer of dimers. The cofactor is Mg(2+).

Its subcellular location is the cytoplasm. It catalyses the reaction 3-methyl-2-oxobutanoate + (6R)-5,10-methylene-5,6,7,8-tetrahydrofolate + H2O = 2-dehydropantoate + (6S)-5,6,7,8-tetrahydrofolate. The protein operates within cofactor biosynthesis; (R)-pantothenate biosynthesis; (R)-pantoate from 3-methyl-2-oxobutanoate: step 1/2. Its function is as follows. Catalyzes the reversible reaction in which hydroxymethyl group from 5,10-methylenetetrahydrofolate is transferred onto alpha-ketoisovalerate to form ketopantoate. The sequence is that of 3-methyl-2-oxobutanoate hydroxymethyltransferase from Staphylococcus aureus (strain COL).